The following is a 359-amino-acid chain: 3-isopropylmalate dehydrogenase (359 aa).

An NAD(+)-binding site is contributed by 76-89; the sequence is GPKWDTIERSIRPE. Residues R96, R106, R134, and D225 each coordinate substrate. Mg(2+) contacts are provided by D225, D249, and D253. Residue 283–295 participates in NAD(+) binding; that stretch reads GSAPDIAGQNVAN.

It belongs to the isocitrate and isopropylmalate dehydrogenases family. LeuB type 1 subfamily. As to quaternary structure, homodimer. Mg(2+) serves as cofactor. Requires Mn(2+) as cofactor.

The protein localises to the cytoplasm. The catalysed reaction is (2R,3S)-3-isopropylmalate + NAD(+) = 4-methyl-2-oxopentanoate + CO2 + NADH. It participates in amino-acid biosynthesis; L-leucine biosynthesis; L-leucine from 3-methyl-2-oxobutanoate: step 3/4. Functionally, catalyzes the oxidation of 3-carboxy-2-hydroxy-4-methylpentanoate (3-isopropylmalate) to 3-carboxy-4-methyl-2-oxopentanoate. The product decarboxylates to 4-methyl-2 oxopentanoate. This Acinetobacter baylyi (strain ATCC 33305 / BD413 / ADP1) protein is 3-isopropylmalate dehydrogenase.